We begin with the raw amino-acid sequence, 207 residues long: dTTP/UTP pyrophosphatase (207 aa).

The active-site Proton acceptor is the D79.

Belongs to the Maf family. YhdE subfamily. The cofactor is a divalent metal cation.

It localises to the cytoplasm. It catalyses the reaction dTTP + H2O = dTMP + diphosphate + H(+). The catalysed reaction is UTP + H2O = UMP + diphosphate + H(+). Nucleoside triphosphate pyrophosphatase that hydrolyzes dTTP and UTP. May have a dual role in cell division arrest and in preventing the incorporation of modified nucleotides into cellular nucleic acids. The polypeptide is dTTP/UTP pyrophosphatase (Rhodopseudomonas palustris (strain BisB5)).